The primary structure comprises 474 residues: tRNA (guanine(37)-N(1))-methyltransferase (474 aa).

Residues His-234, 274–275 (DL), 303–304 (DA), and Asn-345 each bind S-adenosyl-L-methionine. The segment covering 452–464 (EPEAQCESEEAEE) has biased composition (acidic residues). The disordered stretch occupies residues 452 to 474 (EPEAQCESEEAEEPSSKRIKVDT). Residues 465 to 474 (PSSKRIKVDT) are compositionally biased toward basic and acidic residues.

The protein belongs to the class I-like SAM-binding methyltransferase superfamily. TRM5/TYW2 family. Monomer.

Its subcellular location is the mitochondrion matrix. The protein resides in the nucleus. The protein localises to the cytoplasm. It carries out the reaction guanosine(37) in tRNA + S-adenosyl-L-methionine = N(1)-methylguanosine(37) in tRNA + S-adenosyl-L-homocysteine + H(+). Specifically methylates the N1 position of guanosine-37 in various cytoplasmic and mitochondrial tRNAs. Methylation is not dependent on the nature of the nucleoside 5' of the target nucleoside. This is the first step in the biosynthesis of wybutosine (yW), a modified base adjacent to the anticodon of tRNAs and required for accurate decoding. The polypeptide is tRNA (guanine(37)-N(1))-methyltransferase (Caenorhabditis elegans).